We begin with the raw amino-acid sequence, 311 residues long: tRNA dimethylallyltransferase (311 aa).

13 to 20 is a binding site for ATP; the sequence is GPTASGKT. 15-20 provides a ligand contact to substrate; sequence TASGKT. Interaction with substrate tRNA stretches follow at residues 38-41 and 166-170; these read DSMQ and QRGLR.

It belongs to the IPP transferase family. As to quaternary structure, monomer. It depends on Mg(2+) as a cofactor.

It catalyses the reaction adenosine(37) in tRNA + dimethylallyl diphosphate = N(6)-dimethylallyladenosine(37) in tRNA + diphosphate. Its function is as follows. Catalyzes the transfer of a dimethylallyl group onto the adenine at position 37 in tRNAs that read codons beginning with uridine, leading to the formation of N6-(dimethylallyl)adenosine (i(6)A). The chain is tRNA dimethylallyltransferase from Staphylococcus aureus (strain MSSA476).